Here is a 291-residue protein sequence, read N- to C-terminus: Inositol-1-monophosphatase (291 aa).

Positions 83, 104, 106, and 107 each coordinate Mg(2+). E83 serves as a coordination point for substrate. Substrate-binding positions include 106-109 (IDGT), R206, and D235. D235 contributes to the Mg(2+) binding site.

The protein belongs to the inositol monophosphatase superfamily. The cofactor is Mg(2+).

It catalyses the reaction a myo-inositol phosphate + H2O = myo-inositol + phosphate. This Mycobacterium leprae (strain TN) protein is Inositol-1-monophosphatase (suhB).